We begin with the raw amino-acid sequence, 146 residues long: MSFWKEKSLAQLDTQEWESLCDGCGKCCLNKLIDDETEELYYTNAACKLLDHQDGHCVHYQERFTFVPSCTQVTVDNVAQLTWLPDSCAYRRLYLGRELPSWHPLITGSKAAMHEAGMSTQNKVKCETKVRYIEDHIVLWPMRDLD.

This sequence belongs to the UPF0260 family.

In Shewanella woodyi (strain ATCC 51908 / MS32), this protein is UPF0260 protein Swoo_2117.